Consider the following 83-residue polypeptide: Putative defensin-like protein 131 (83 aa).

A signal peptide spans 1-34; it reads MAKNRVLTIFYCTIYYCICFKYVLLGMVVEKTQG. Intrachain disulfides connect Cys37–Cys83, Cys46–Cys65, Cys51–Cys77, and Cys55–Cys79.

This sequence belongs to the DEFL family.

The protein localises to the secreted. The chain is Putative defensin-like protein 131 (LCR29) from Arabidopsis thaliana (Mouse-ear cress).